A 715-amino-acid polypeptide reads, in one-letter code: Fatty acid oxidation complex subunit alpha (715 aa).

The interval 1-189 (MIYQGETLTV…KVGAIDAVVA (189 aa)) is enoyl-CoA hydratase/isomerase. Asp296 is a substrate binding site. Residues 311 to 715 (AKATSHAAVL…EMAAQGKTFY (405 aa)) form a 3-hydroxyacyl-CoA dehydrogenase region. NAD(+) is bound by residues Met325, Asp344, 401 to 403 (VVE), Lys408, and Ser430. The active-site For 3-hydroxyacyl-CoA dehydrogenase activity is His451. Asn454 is a binding site for NAD(+). The substrate site is built by Asn501 and Tyr661.

In the N-terminal section; belongs to the enoyl-CoA hydratase/isomerase family. It in the C-terminal section; belongs to the 3-hydroxyacyl-CoA dehydrogenase family. Heterotetramer of two alpha chains (FadB) and two beta chains (FadA).

The enzyme catalyses a (3S)-3-hydroxyacyl-CoA + NAD(+) = a 3-oxoacyl-CoA + NADH + H(+). The catalysed reaction is a (3S)-3-hydroxyacyl-CoA = a (2E)-enoyl-CoA + H2O. It catalyses the reaction a 4-saturated-(3S)-3-hydroxyacyl-CoA = a (3E)-enoyl-CoA + H2O. It carries out the reaction (3S)-3-hydroxybutanoyl-CoA = (3R)-3-hydroxybutanoyl-CoA. The enzyme catalyses a (3Z)-enoyl-CoA = a 4-saturated (2E)-enoyl-CoA. The catalysed reaction is a (3E)-enoyl-CoA = a 4-saturated (2E)-enoyl-CoA. It functions in the pathway lipid metabolism; fatty acid beta-oxidation. In terms of biological role, involved in the aerobic and anaerobic degradation of long-chain fatty acids via beta-oxidation cycle. Catalyzes the formation of 3-oxoacyl-CoA from enoyl-CoA via L-3-hydroxyacyl-CoA. It can also use D-3-hydroxyacyl-CoA and cis-3-enoyl-CoA as substrate. The protein is Fatty acid oxidation complex subunit alpha of Aeromonas hydrophila subsp. hydrophila (strain ATCC 7966 / DSM 30187 / BCRC 13018 / CCUG 14551 / JCM 1027 / KCTC 2358 / NCIMB 9240 / NCTC 8049).